We begin with the raw amino-acid sequence, 388 residues long: Beta-hexosaminidase LpqI (388 aa).

The N-terminal stretch at 1 to 19 (MAFPRTLAILAAAAALVVA) is a signal peptide. Residue C20 is the site of N-palmitoyl cysteine attachment. Residue C20 is the site of S-diacylglycerol cysteine attachment. Substrate contacts are provided by residues D123, R131, R193, and 223–224 (KH). The Proton donor/acceptor role is filled by H236. The active-site Nucleophile is the D311.

This sequence belongs to the glycosyl hydrolase 3 family.

It localises to the cell inner membrane. The enzyme catalyses Hydrolysis of terminal non-reducing N-acetyl-D-hexosamine residues in N-acetyl-beta-D-hexosaminides.. The protein operates within cell wall biogenesis; peptidoglycan recycling. Plays a role in peptidoglycan recycling by cleaving the terminal beta-1,4-linked N-acetylglucosamine (GlcNAc) from peptidoglycan fragments. Acts as a regulator for GlcNAc-MurNAc levels by cleaving disaccharides and allowing the breakdown of MurNAc. The protein is Beta-hexosaminidase LpqI of Mycobacterium bovis (strain BCG / Pasteur 1173P2).